We begin with the raw amino-acid sequence, 332 residues long: Adenosine deaminase (332 aa).

Residues His-12 and His-14 each coordinate Zn(2+). The substrate site is built by His-14, Asp-16, and Gly-169. His-196 serves as a coordination point for Zn(2+). The Proton donor role is filled by Glu-199. Zn(2+) is bound at residue Asp-277.

Belongs to the metallo-dependent hydrolases superfamily. Adenosine and AMP deaminases family. Adenosine deaminase subfamily. It depends on Zn(2+) as a cofactor.

It carries out the reaction adenosine + H2O + H(+) = inosine + NH4(+). The enzyme catalyses 2'-deoxyadenosine + H2O + H(+) = 2'-deoxyinosine + NH4(+). Its function is as follows. Catalyzes the hydrolytic deamination of adenosine and 2-deoxyadenosine. In Vibrio atlanticus (strain LGP32) (Vibrio splendidus (strain Mel32)), this protein is Adenosine deaminase.